A 149-amino-acid polypeptide reads, in one-letter code: Deoxyuridine 5'-triphosphate nucleotidohydrolase (149 aa).

Residues 68–70, N81, 85–87, and K95 each bind substrate; these read RSG and TID.

This sequence belongs to the dUTPase family. The cofactor is Mg(2+).

It carries out the reaction dUTP + H2O = dUMP + diphosphate + H(+). Its pathway is pyrimidine metabolism; dUMP biosynthesis; dUMP from dCTP (dUTP route): step 2/2. Its function is as follows. This enzyme is involved in nucleotide metabolism: it produces dUMP, the immediate precursor of thymidine nucleotides and it decreases the intracellular concentration of dUTP so that uracil cannot be incorporated into DNA. This Bdellovibrio bacteriovorus (strain ATCC 15356 / DSM 50701 / NCIMB 9529 / HD100) protein is Deoxyuridine 5'-triphosphate nucleotidohydrolase.